Reading from the N-terminus, the 402-residue chain is Thyroid hormone receptor alpha (402 aa).

Positions 1 to 22 (MEQKPSTLDPLSEPEDTRWLDG) are disordered. The segment at 1–50 (MEQKPSTLDPLSEPEDTRWLDGKRKRKSSQCLVKSSMSGYIPSYLDKDEQ) is modulating. S12 bears the Phosphoserine; by CK2 mark. At S28 the chain carries Phosphoserine. Positions 51, 54, 68, 71, 89, 95, 105, and 108 each coordinate Zn(2+). NR C4-type zinc fingers lie at residues 51-71 (CVVC…CAGC) and 89-113 (CKYD…FKKC). Residues 51–125 (CVVCGDKATG…VGMAMDLVLY (75 aa)) constitute a DNA-binding region (nuclear receptor). Positions 161–402 (EEWELIHVVT…ELFPPLFLEV (242 aa)) constitute an NR LBD domain. Residues R226 and S275 each contribute to the 3,3',5-triiodo-L-thyronine site.

The protein belongs to the nuclear hormone receptor family. NR1 subfamily. Probably interacts with SFPQ.

It is found in the nucleus. Nuclear hormone receptor that can act as a repressor or activator of transcription. High affinity receptor for thyroid hormones, including triiodothyronine and thyroxine. The sequence is that of Thyroid hormone receptor alpha (THRA) from Pygoscelis adeliae (Adelie penguin).